The sequence spans 37 residues: Cytochrome b6-f complex subunit 5 (37 aa).

A helical transmembrane segment spans residues 5–25 (LLSGIVLGLIVVTLSGLFYAA).

This sequence belongs to the PetG family. The 4 large subunits of the cytochrome b6-f complex are cytochrome b6, subunit IV (17 kDa polypeptide, PetD), cytochrome f and the Rieske protein, while the 4 small subunits are PetG, PetL, PetM and PetN. The complex functions as a dimer.

The protein resides in the cellular thylakoid membrane. Its function is as follows. Component of the cytochrome b6-f complex, which mediates electron transfer between photosystem II (PSII) and photosystem I (PSI), cyclic electron flow around PSI, and state transitions. PetG is required for either the stability or assembly of the cytochrome b6-f complex. This Trichormus variabilis (strain ATCC 29413 / PCC 7937) (Anabaena variabilis) protein is Cytochrome b6-f complex subunit 5.